A 37-amino-acid polypeptide reads, in one-letter code: Large ribosomal subunit protein bL36 (37 aa).

It belongs to the bacterial ribosomal protein bL36 family.

The protein is Large ribosomal subunit protein bL36 of Bifidobacterium adolescentis (strain ATCC 15703 / DSM 20083 / NCTC 11814 / E194a).